The chain runs to 50 residues: ISSQHLCGSHLVEALNLVCGDRGFFYNPRGIVEQCCHRPCSIFELENYCN.

Intrachain disulfides connect Cys-7-Cys-36, Cys-19-Cys-49, and Cys-35-Cys-40.

This sequence belongs to the insulin family. In terms of assembly, heterodimer of a B chain and an A chain linked by two disulfide bonds.

It is found in the secreted. Functionally, insulin decreases blood glucose concentration. It increases cell permeability to monosaccharides, amino acids and fatty acids. It accelerates glycolysis, the pentose phosphate cycle, and glycogen synthesis in liver. This Katsuwonus pelamis (Skipjack tuna) protein is Insulin-1.